Here is a 349-residue protein sequence, read N- to C-terminus: Fructose-1,6-bisphosphatase class 1 (349 aa).

Mg(2+)-binding residues include Glu-91, Asp-110, Leu-112, and Asp-113. Substrate contacts are provided by residues 113–116 (DGSS) and Asn-205. Glu-277 is a binding site for Mg(2+).

It belongs to the FBPase class 1 family. In terms of assembly, homotetramer. Mg(2+) serves as cofactor.

It localises to the cytoplasm. It carries out the reaction beta-D-fructose 1,6-bisphosphate + H2O = beta-D-fructose 6-phosphate + phosphate. It functions in the pathway carbohydrate biosynthesis; gluconeogenesis. This is Fructose-1,6-bisphosphatase class 1 from Sinorhizobium medicae (strain WSM419) (Ensifer medicae).